The sequence spans 140 residues: ATP synthase epsilon chain (140 aa).

The protein belongs to the ATPase epsilon chain family. F-type ATPases have 2 components, CF(1) - the catalytic core - and CF(0) - the membrane proton channel. CF(1) has five subunits: alpha(3), beta(3), gamma(1), delta(1), epsilon(1). CF(0) has three main subunits: a, b and c.

The protein localises to the cell membrane. Its function is as follows. Produces ATP from ADP in the presence of a proton gradient across the membrane. The polypeptide is ATP synthase epsilon chain (Baumannia cicadellinicola subsp. Homalodisca coagulata).